A 329-amino-acid polypeptide reads, in one-letter code: Porphobilinogen deaminase (329 aa).

Cys250 is modified (S-(dipyrrolylmethanemethyl)cysteine).

Belongs to the HMBS family. As to quaternary structure, monomer. It depends on dipyrromethane as a cofactor.

The catalysed reaction is 4 porphobilinogen + H2O = hydroxymethylbilane + 4 NH4(+). The protein operates within porphyrin-containing compound metabolism; protoporphyrin-IX biosynthesis; coproporphyrinogen-III from 5-aminolevulinate: step 2/4. Its function is as follows. Tetrapolymerization of the monopyrrole PBG into the hydroxymethylbilane pre-uroporphyrinogen in several discrete steps. In Burkholderia mallei (strain NCTC 10247), this protein is Porphobilinogen deaminase.